A 426-amino-acid chain; its full sequence is Serine hydroxymethyltransferase (426 aa).

(6S)-5,6,7,8-tetrahydrofolate is bound by residues L115 and G119–I121. K225 is modified (N6-(pyridoxal phosphate)lysine).

It belongs to the SHMT family. Homodimer. Requires pyridoxal 5'-phosphate as cofactor.

It localises to the cytoplasm. Its pathway is amino-acid biosynthesis; glycine biosynthesis; glycine from L-serine: step 1/1. Catalyzes the reversible interconversion of serine and glycine with a modified folate serving as the one-carbon carrier. Also exhibits a pteridine-independent aldolase activity toward beta-hydroxyamino acids, producing glycine and aldehydes, via a retro-aldol mechanism. This chain is Serine hydroxymethyltransferase, found in Thermoplasma acidophilum (strain ATCC 25905 / DSM 1728 / JCM 9062 / NBRC 15155 / AMRC-C165).